The following is a 319-amino-acid chain: Acetyl-coenzyme A carboxylase carboxyl transferase subunit alpha (319 aa).

Residues 32–293 (NVDTEVRALE…KAVLLNELEA (262 aa)) form the CoA carboxyltransferase C-terminal domain.

It belongs to the AccA family. In terms of assembly, acetyl-CoA carboxylase is a heterohexamer composed of biotin carboxyl carrier protein (AccB), biotin carboxylase (AccC) and two subunits each of ACCase subunit alpha (AccA) and ACCase subunit beta (AccD).

The protein localises to the cytoplasm. The catalysed reaction is N(6)-carboxybiotinyl-L-lysyl-[protein] + acetyl-CoA = N(6)-biotinyl-L-lysyl-[protein] + malonyl-CoA. It functions in the pathway lipid metabolism; malonyl-CoA biosynthesis; malonyl-CoA from acetyl-CoA: step 1/1. Component of the acetyl coenzyme A carboxylase (ACC) complex. First, biotin carboxylase catalyzes the carboxylation of biotin on its carrier protein (BCCP) and then the CO(2) group is transferred by the carboxyltransferase to acetyl-CoA to form malonyl-CoA. This Xylella fastidiosa (strain M12) protein is Acetyl-coenzyme A carboxylase carboxyl transferase subunit alpha.